The sequence spans 841 residues: Phosphatidylglycerol lysyltransferase (841 aa).

Residues 1–8 (MTKELRSK) lie on the Cytoplasmic side of the membrane. A helical membrane pass occupies residues 9–29 (LFTILKIAFALTLFTIVAITL). Over 30 to 52 (YKELSHINLKDAIKSFSKINRFW) the chain is Extracellular. The helical transmembrane segment at 53–73 (LVALFLSGGASIIVLSIYDVI) threads the bilayer. Residues 74-89 (LAKTLKLKIGLAKTIR) are Cytoplasmic-facing. The chain crosses the membrane as a helical span at residues 90–110 (IGYIVNALNAVVGFGGFIGAS). At 111 to 129 (VRFLFYKNTTDDKKALFHT) the chain is on the extracellular side. Residues 130–150 (ISIVLISMLTGLSLLSILVVI) form a helical membrane-spanning segment. Residues 151–164 (HVFDISHIFTPYPW) are Cytoplasmic-facing. The chain crosses the membrane as a helical span at residues 165 to 185 (VKWLMYVVALFLPIFVVFTII). At 186–193 (KPVQKTHR) the chain is on the extracellular side. The chain crosses the membrane as a helical span at residues 194–216 (LLGVYCTIVSGVEWFVAALVLYM). The Cytoplasmic segment spans residues 217–229 (SMAIVGVQIPFAT). The chain crosses the membrane as a helical span at residues 230–250 (FMGIFILAALSGLISFIPGGF). Residues 251 to 270 (GTFDLVVLLGLKALNVNEEA) lie on the Extracellular side of the membrane. Residues 271–291 (IVLGLSLYRFAYYLFPVLIAL) form a helical membrane-spanning segment. Residues 292 to 336 (ILSTFEFRSTAKRYWEDSRILVPVKDMTSLLGSYQKDIIARIPSF) lie on the Cytoplasmic side of the membrane. Residues 337–357 (AIALLLLFTSLVFFLNNLTII) traverse the membrane as a helical segment. The Extracellular segment spans residues 358–367 (YDGLYDPNHY). Residues 368–388 (IYYIIVSIHTCACLLLLLNVI) traverse the membrane as a helical segment. Residues 389-392 (GVYK) are Cytoplasmic-facing. Residues 393–413 (LSKRAILFSIISVLFIFIATA) form a helical membrane-spanning segment. Residues 414-415 (YT) are Extracellular-facing. Residues 416-436 (YASFILLSWLTVIFILLLVFY) form a helical membrane-spanning segment. Residues 437–448 (RRARVIKRPFRY) are Cytoplasmic-facing. The helical transmembrane segment at 449–469 (SKLLLSVITGAIILYINHLVI) threads the bilayer. Residues 470-489 (KSTFYSLEIYHIEMLTSILR) lie on the Extracellular side of the membrane. Residues 490–510 (YYFWITILLVAIIVGVIVWWF) form a helical membrane-spanning segment. The Cytoplasmic portion of the chain corresponds to 511–841 (EYRYRSSNSR…KVMRVIRKNN (331 aa)).

It belongs to the LPG synthase family.

It is found in the cell membrane. It catalyses the reaction L-lysyl-tRNA(Lys) + a 1,2-diacyl-sn-glycero-3-phospho-(1'-sn-glycerol) = a 1,2-diacyl-sn-glycero-3-phospho-1'-(3'-O-L-lysyl)-sn-glycerol + tRNA(Lys). Catalyzes the transfer of a lysyl group from L-lysyl-tRNA(Lys) to membrane-bound phosphatidylglycerol (PG), which produces lysylphosphatidylglycerol (LPG), a major component of the bacterial membrane with a positive net charge. LPG synthesis contributes to bacterial virulence as it is involved in the resistance mechanism against cationic antimicrobial peptides (CAMP) produces by the host's immune system (defensins, cathelicidins) and by the competing microorganisms (bacteriocins). In fact, the modification of anionic phosphatidylglycerol with positively charged L-lysine results in repulsion of the peptides. In Staphylococcus xylosus, this protein is Phosphatidylglycerol lysyltransferase (mprF).